Here is a 137-residue protein sequence, read N- to C-terminus: Small ribosomal subunit protein uS11 (137 aa).

Over residues 1-11 (MPPKSRSTGPK) the composition is skewed to polar residues. Disordered regions lie at residues 1–28 (MPPK…PHGA) and 117–137 (TISD…RRRV). Over residues 12–21 (KTQKARRRDK) the composition is skewed to basic residues.

This sequence belongs to the universal ribosomal protein uS11 family. As to quaternary structure, part of the 30S ribosomal subunit. Interacts with proteins S7 and S18. Binds to IF-3.

Located on the platform of the 30S subunit, it bridges several disparate RNA helices of the 16S rRNA. Forms part of the Shine-Dalgarno cleft in the 70S ribosome. The sequence is that of Small ribosomal subunit protein uS11 from Rhodococcus opacus (strain B4).